A 284-amino-acid chain; its full sequence is MKKIQAGTVGIGLRHPHYQTLLDQLPTLGFLEVHSENYFNPHSQNRFYLEQIAAHYPLSFHGIGLSIGSSEDISKTHLQNLKQIIDIFQPVLVSDHISWSSLQSNFFNDLLPIPYTKKALSCFVNNLNQTQEHLQRQILIENPSSYLEYNDSEMSEPEFINEIVKQTGCGLLLDLNNVYVSATNHQFSVEKYLDIIDHTTVQEIHLAGFTQKQVNNSTMLIDTHSTLISQSVWDIYQTYMSTKKTDALTLIEWDLDIPKLGTLIEEHNKAINIKQSLCTSDKHV.

The protein belongs to the UPF0276 family.

The chain is UPF0276 protein Ping_0944 from Psychromonas ingrahamii (strain DSM 17664 / CCUG 51855 / 37).